Consider the following 367-residue polypeptide: Glutamate 5-kinase (367 aa).

K9 contributes to the ATP binding site. Substrate is bound by residues S49, D136, and N148. ATP contacts are provided by residues 168–169 (TD) and 210–216 (TGGMKSK). Positions 276–350 (SGQIEIDAGA…GMQSQHIQAR (75 aa)) constitute a PUA domain.

The protein belongs to the glutamate 5-kinase family.

It is found in the cytoplasm. The catalysed reaction is L-glutamate + ATP = L-glutamyl 5-phosphate + ADP. It participates in amino-acid biosynthesis; L-proline biosynthesis; L-glutamate 5-semialdehyde from L-glutamate: step 1/2. Functionally, catalyzes the transfer of a phosphate group to glutamate to form L-glutamate 5-phosphate. The protein is Glutamate 5-kinase of Bacillus cereus (strain ATCC 10987 / NRS 248).